The primary structure comprises 121 residues: Large ribosomal subunit protein uL14 (121 aa).

This sequence belongs to the universal ribosomal protein uL14 family. As to quaternary structure, part of the 50S ribosomal subunit. Forms a cluster with proteins L3 and L19. In the 70S ribosome, L14 and L19 interact and together make contacts with the 16S rRNA in bridges B5 and B8.

Its function is as follows. Binds to 23S rRNA. Forms part of two intersubunit bridges in the 70S ribosome. The chain is Large ribosomal subunit protein uL14 from Synechococcus sp. (strain WH7803).